The primary structure comprises 108 residues: uncharacterized protein (108 aa).

The chain crosses the membrane as a helical span at residues 59–81 (NIVIILWKIMVVIISSIIHRTYI).

Its subcellular location is the membrane. This is an uncharacterized protein from Rickettsia conorii (strain ATCC VR-613 / Malish 7).